We begin with the raw amino-acid sequence, 224 residues long: MIGRLSGVLVYRGRDHIVLDVRGVGYVVQCSERTLAGMPAPGGPVALFTELLVREDLLQLYGFPTLLEKEWHRLLTSVQGVGAKASMSILSTLGVDGVGRAIALGDWGALRKAQGVGPKIAQRVVNELKDKGPEVMAMGGTLEAALDGVIEDGMAASEGIEPPSAARPAVPSAASDQAGALSALVNLGYGQGEAASAVATAAGEGAVGETDIIRAALRLLAPKG.

Residues 1 to 64 are domain I; that stretch reads MIGRLSGVLV…EDLLQLYGFP (64 aa). Residues 65–143 are domain II; sequence TLLEKEWHRL…EVMAMGGTLE (79 aa). A flexible linker region spans residues 144–171; it reads AALDGVIEDGMAASEGIEPPSAARPAVP. Residues 172–224 form a domain III region; that stretch reads SAASDQAGALSALVNLGYGQGEAASAVATAAGEGAVGETDIIRAALRLLAPKG.

The protein belongs to the RuvA family. In terms of assembly, homotetramer. Forms an RuvA(8)-RuvB(12)-Holliday junction (HJ) complex. HJ DNA is sandwiched between 2 RuvA tetramers; dsDNA enters through RuvA and exits via RuvB. An RuvB hexamer assembles on each DNA strand where it exits the tetramer. Each RuvB hexamer is contacted by two RuvA subunits (via domain III) on 2 adjacent RuvB subunits; this complex drives branch migration. In the full resolvosome a probable DNA-RuvA(4)-RuvB(12)-RuvC(2) complex forms which resolves the HJ.

It is found in the cytoplasm. Functionally, the RuvA-RuvB-RuvC complex processes Holliday junction (HJ) DNA during genetic recombination and DNA repair, while the RuvA-RuvB complex plays an important role in the rescue of blocked DNA replication forks via replication fork reversal (RFR). RuvA specifically binds to HJ cruciform DNA, conferring on it an open structure. The RuvB hexamer acts as an ATP-dependent pump, pulling dsDNA into and through the RuvAB complex. HJ branch migration allows RuvC to scan DNA until it finds its consensus sequence, where it cleaves and resolves the cruciform DNA. The chain is Holliday junction branch migration complex subunit RuvA from Dinoroseobacter shibae (strain DSM 16493 / NCIMB 14021 / DFL 12).